Consider the following 280-residue polypeptide: Phosphonates import ATP-binding protein PhnC (280 aa).

An ABC transporter domain is found at 2-245 (FELKNVTRRF…AVKEIYGTDK (244 aa)). An ATP-binding site is contributed by 34–41 (GRSGAGKS). Positions 257–280 (TSLESKRRAEDVSSGRVAKAAAVH) are disordered. Residues 260–269 (ESKRRAEDVS) show a composition bias toward basic and acidic residues.

This sequence belongs to the ABC transporter superfamily. Phosphonates importer (TC 3.A.1.9.1) family. The complex is composed of two ATP-binding proteins (PhnC), two transmembrane proteins (PhnE) and a solute-binding protein (PhnD).

It is found in the cell inner membrane. It carries out the reaction phosphonate(out) + ATP + H2O = phosphonate(in) + ADP + phosphate + H(+). Its function is as follows. Part of the ABC transporter complex PhnCDE involved in phosphonates import. Responsible for energy coupling to the transport system. The polypeptide is Phosphonates import ATP-binding protein PhnC (Rhizobium johnstonii (strain DSM 114642 / LMG 32736 / 3841) (Rhizobium leguminosarum bv. viciae)).